We begin with the raw amino-acid sequence, 936 residues long: Aftiphilin (936 aa).

The tract at residues 1–36 is disordered; the sequence is MEPDIIRMYSSSPPPLDNGAEDDDDDEFGEFGGFSE. An interaction with AP1G1, AP1G2, GGA1 and GGA3 region spans residues 1–523; it reads MEPDIIRMYS…ARKSSGTGTE (523 aa). A compositionally biased stretch (acidic residues) spans 19–29; it reads GAEDDDDDEFG. A WXXF motif 1 motif is present at residues 28–31; sequence FGEF. Ser151 carries the post-translational modification Phosphoserine. Disordered regions lie at residues 197 to 216 and 374 to 409; these read TDDLDNVADSKGRKPLSTHS and KTSDDEVGSPKEESRKFTNFQSPNIDPTEENDLDDS. Over residues 374 to 389 the composition is skewed to basic and acidic residues; that stretch reads KTSDDEVGSPKEESRK. Residues 386–610 form an interaction with AP1G1 region; that stretch reads ESRKFTNFQS…EAWQSHRTDE (225 aa). The residue at position 395 (Ser395) is a Phosphoserine. The WXXF motif 2 motif lies at 432 to 435; sequence FGDF. A WXXF motif 3 (partial) motif is present at residues 436 to 438; that stretch reads GDF. The WXXF motif 4 signature appears at 478-481; the sequence is FGEF. The residue at position 518 (Ser518) is a Phosphoserine. A disordered region spans residues 589 to 637; the sequence is GDQQATESHHRKEAWQSHRTDENIDTPGTPKTHSVPSATSKGAVASGHL. Residues 595–610 show a composition bias toward basic and acidic residues; it reads ESHHRKEAWQSHRTDE. A Phosphothreonine modification is found at Thr617. A compositionally biased stretch (polar residues) spans 617 to 628; it reads TPKTHSVPSATS. The CLTCL1/Clathrin-binding signature appears at 716 to 718; it reads YQW. Residues 825–829 are clathrin-binding; sequence LLNLD.

As to quaternary structure, self-associates. Interacts with GGA1 (via GAE domain). Interacts with GGA3 (via GAE domain), AP1G1 (via GAE domain) and AP1G2 (via GAE domain). Component of the aftiphilin/p200/gamma-synergin complex, at least composed of AFTPH/aftiphilin, HEATR5B/p200a and SYNRG/gamma-synergin, which plays a role in the AP1G1/AP-1-mediated protein trafficking from early to recycling endosomes. Within the complex interacts with HEATR5B/p200a and SYNRG/gamma-synergin; the interactions are direct. Interacts with AP1G1/AP-1; the interaction is required to recruit AFTPH/aftiphilin to the perinuclear region of the cell. Interacts with CLTCL1/Clathrin.

It localises to the cytoplasm. It is found in the perinuclear region. Its subcellular location is the cytoplasmic vesicle. The protein resides in the clathrin-coated vesicle. Component of clathrin-coated vesicles. Component of the aftiphilin/p200/gamma-synergin complex, which plays roles in AP1G1/AP-1-mediated protein trafficking including the trafficking of transferrin from early to recycling endosomes, and the membrane trafficking of furin and the lysosomal enzyme cathepsin D between the trans-Golgi network (TGN) and endosomes. This chain is Aftiphilin (AFTPH), found in Homo sapiens (Human).